The sequence spans 183 residues: Large ribosomal subunit protein uL13m (183 aa).

Belongs to the universal ribosomal protein uL13 family. In terms of assembly, component of the mitochondrial large ribosomal subunit (mt-LSU). Mature N.crassa 74S mitochondrial ribosomes consist of a small (37S) and a large (54S) subunit. The 37S small subunit contains a 16S ribosomal RNA (16S mt-rRNA) and 32 different proteins. The 54S large subunit contains a 23S rRNA (23S mt-rRNA) and 42 different proteins.

It is found in the mitochondrion. Its function is as follows. Component of the mitochondrial ribosome (mitoribosome), a dedicated translation machinery responsible for the synthesis of mitochondrial genome-encoded proteins, including at least some of the essential transmembrane subunits of the mitochondrial respiratory chain. The mitoribosomes are attached to the mitochondrial inner membrane and translation products are cotranslationally integrated into the membrane. In Neurospora crassa (strain ATCC 24698 / 74-OR23-1A / CBS 708.71 / DSM 1257 / FGSC 987), this protein is Large ribosomal subunit protein uL13m (mrpl23).